A 345-amino-acid chain; its full sequence is Methylthioribose-1-phosphate isomerase 2 (345 aa).

Substrate is bound by residues 47–49, Arg88, and Gln194; that span reads RGA. The Proton donor role is filled by Asp235. 245–246 provides a ligand contact to substrate; it reads NK.

The protein belongs to the eIF-2B alpha/beta/delta subunits family. MtnA subfamily.

It carries out the reaction 5-(methylsulfanyl)-alpha-D-ribose 1-phosphate = 5-(methylsulfanyl)-D-ribulose 1-phosphate. It participates in amino-acid biosynthesis; L-methionine biosynthesis via salvage pathway; L-methionine from S-methyl-5-thio-alpha-D-ribose 1-phosphate: step 1/6. In terms of biological role, catalyzes the interconversion of methylthioribose-1-phosphate (MTR-1-P) into methylthioribulose-1-phosphate (MTRu-1-P). The protein is Methylthioribose-1-phosphate isomerase 2 of Pseudothermotoga lettingae (strain ATCC BAA-301 / DSM 14385 / NBRC 107922 / TMO) (Thermotoga lettingae).